A 368-amino-acid chain; its full sequence is Phosphoserine aminotransferase (368 aa).

Position 44 (R44) interacts with L-glutamate. Pyridoxal 5'-phosphate-binding positions include 78–79 (AT), W104, T157, D179, and Q202. At K203 the chain carries N6-(pyridoxal phosphate)lysine. A pyridoxal 5'-phosphate-binding site is contributed by 244-245 (NT).

This sequence belongs to the class-V pyridoxal-phosphate-dependent aminotransferase family. SerC subfamily. Homodimer. It depends on pyridoxal 5'-phosphate as a cofactor.

The protein resides in the cytoplasm. The enzyme catalyses O-phospho-L-serine + 2-oxoglutarate = 3-phosphooxypyruvate + L-glutamate. It carries out the reaction 4-(phosphooxy)-L-threonine + 2-oxoglutarate = (R)-3-hydroxy-2-oxo-4-phosphooxybutanoate + L-glutamate. It participates in amino-acid biosynthesis; L-serine biosynthesis; L-serine from 3-phospho-D-glycerate: step 2/3. It functions in the pathway cofactor biosynthesis; pyridoxine 5'-phosphate biosynthesis; pyridoxine 5'-phosphate from D-erythrose 4-phosphate: step 3/5. In terms of biological role, catalyzes the reversible conversion of 3-phosphohydroxypyruvate to phosphoserine and of 3-hydroxy-2-oxo-4-phosphonooxybutanoate to phosphohydroxythreonine. This Neisseria meningitidis serogroup B (strain ATCC BAA-335 / MC58) protein is Phosphoserine aminotransferase.